The primary structure comprises 173 residues: Mediator of RNA polymerase II transcription subunit 10 (173 aa).

Residues 1 to 10 (MVQQQQQSQQ) show a composition bias toward low complexity. The interval 1–42 (MVQQQQQSQQRMMELHERNDREKLARKTEKEREEERRKQEDD) is disordered. Over residues 13–42 (MELHERNDREKLARKTEKEREEERRKQEDD) the composition is skewed to basic and acidic residues.

The protein belongs to the Mediator complex subunit 10 family. As to quaternary structure, component of the Mediator complex.

It is found in the nucleus. Functionally, component of the Mediator complex, a coactivator involved in the regulated transcription of nearly all RNA polymerase II-dependent genes. Mediator functions as a bridge to convey information from gene-specific regulatory proteins to the basal RNA polymerase II transcription machinery. Mediator is recruited to promoters by direct interactions with regulatory proteins and serves as a scaffold for the assembly of a functional preinitiation complex with RNA polymerase II and the general transcription factors. Required for germ cell development and for transcriptional activation of certain stage-specific inducible promoters. In Caenorhabditis elegans, this protein is Mediator of RNA polymerase II transcription subunit 10 (mdt-10).